Consider the following 353-residue polypeptide: WD repeat-containing protein 55 (353 aa).

7 WD repeats span residues 4-43, 49-88, 92-130, 133-172, 175-214, 218-257, and 260-299; these read DLGA…SLVR, AHKE…QVAH, AHED…CSHE, AHED…VQSQ, FSED…DCSD, DLAP…IIQP, and SHDY…EGSN. The segment at 300 to 353 is disordered; sequence VNSGNASGAAEDSDSDNDGMDLDNDPSKSSKGSKRKTKSKANTLNATNNFFADL. A compositionally biased stretch (acidic residues) spans 310–323; that stretch reads EDSDSDNDGMDLDN. A compositionally biased stretch (low complexity) spans 339–353; sequence KANTLNATNNFFADL.

It belongs to the WD repeat WDR55 family. Interacts with DDB1A. As to expression, highly expressed in roots. Expressed in cotyledons, leaves, buds and flowers.

It localises to the nucleus. The protein resides in the cytoplasm. Required for male and female gametogenesis, seed development, and embryo and endosperm development at early stages. Involved in the establishment of bilateral symmetry in the transition from the globular to the heart embryo stage. May act in the frame of a CRL4 complex. Required for proper vegetative growth and organization of the adult plant body. May play a role in hormonal control of plant development. The sequence is that of WD repeat-containing protein 55 from Arabidopsis thaliana (Mouse-ear cress).